We begin with the raw amino-acid sequence, 383 residues long: Dual-specificity RNA methyltransferase RlmN (383 aa).

Glu95 serves as the catalytic Proton acceptor. The region spanning 101-349 is the Radical SAM core domain; the sequence is EETRGTLCVS…TTVRKTRGDD (249 aa). A disulfide bond links Cys108 and Cys354. The [4Fe-4S] cluster site is built by Cys115, Cys119, and Cys122. Residues 180–181, Ser212, 234–236, and Asn311 contribute to the S-adenosyl-L-methionine site; these read GE and SLH. Cys354 serves as the catalytic S-methylcysteine intermediate.

The protein belongs to the radical SAM superfamily. RlmN family. It depends on [4Fe-4S] cluster as a cofactor.

The protein resides in the cytoplasm. The enzyme catalyses adenosine(2503) in 23S rRNA + 2 reduced [2Fe-2S]-[ferredoxin] + 2 S-adenosyl-L-methionine = 2-methyladenosine(2503) in 23S rRNA + 5'-deoxyadenosine + L-methionine + 2 oxidized [2Fe-2S]-[ferredoxin] + S-adenosyl-L-homocysteine. It carries out the reaction adenosine(37) in tRNA + 2 reduced [2Fe-2S]-[ferredoxin] + 2 S-adenosyl-L-methionine = 2-methyladenosine(37) in tRNA + 5'-deoxyadenosine + L-methionine + 2 oxidized [2Fe-2S]-[ferredoxin] + S-adenosyl-L-homocysteine. In terms of biological role, specifically methylates position 2 of adenine 2503 in 23S rRNA and position 2 of adenine 37 in tRNAs. m2A2503 modification seems to play a crucial role in the proofreading step occurring at the peptidyl transferase center and thus would serve to optimize ribosomal fidelity. This is Dual-specificity RNA methyltransferase RlmN from Paraburkholderia phytofirmans (strain DSM 17436 / LMG 22146 / PsJN) (Burkholderia phytofirmans).